A 470-amino-acid polypeptide reads, in one-letter code: Pre-mycofactocin glycosyltransferase (470 aa).

Residues 315 to 335 (LVISGGALMAWILMSIGTGLG) traverse the membrane as a helical segment.

It belongs to the glycosyltransferase 2 family.

It is found in the cell membrane. Functionally, involved in the biosynthesis of the enzyme cofactor mycofactocin (MFT). Acts as a glycosyltransferase that catalyzes the oligoglycosylation of pre-mycofactocin (PMFT), adding up to nine beta-1,4-linked glucose residues. Is required for the in vivo ethanol assimilation in M.smegmatis. This is Pre-mycofactocin glycosyltransferase (mftF) from Mycobacterium tuberculosis (strain CDC 1551 / Oshkosh).